Reading from the N-terminus, the 122-residue chain is Large ribosomal subunit protein uL14 (122 aa).

This sequence belongs to the universal ribosomal protein uL14 family. In terms of assembly, part of the 50S ribosomal subunit. Forms a cluster with proteins L3 and L19. In the 70S ribosome, L14 and L19 interact and together make contacts with the 16S rRNA in bridges B5 and B8.

Its function is as follows. Binds to 23S rRNA. Forms part of two intersubunit bridges in the 70S ribosome. This chain is Large ribosomal subunit protein uL14, found in Cupriavidus metallidurans (strain ATCC 43123 / DSM 2839 / NBRC 102507 / CH34) (Ralstonia metallidurans).